Reading from the N-terminus, the 443-residue chain is Xaa-Pro dipeptidase (443 aa).

Mn(2+)-binding residues include aspartate 246, aspartate 257, histidine 339, glutamate 384, and glutamate 423.

This sequence belongs to the peptidase M24B family. Bacterial-type prolidase subfamily. Mn(2+) serves as cofactor.

It carries out the reaction Xaa-L-Pro dipeptide + H2O = an L-alpha-amino acid + L-proline. Its function is as follows. Splits dipeptides with a prolyl residue in the C-terminal position. The sequence is that of Xaa-Pro dipeptidase from Enterobacter sp. (strain 638).